The primary structure comprises 138 residues: Large ribosomal subunit protein uL16c (138 aa).

This sequence belongs to the universal ribosomal protein uL16 family. Part of the 50S ribosomal subunit.

It localises to the plastid. Its subcellular location is the chloroplast. This is Large ribosomal subunit protein uL16c from Phaeodactylum tricornutum (strain CCAP 1055/1).